A 225-amino-acid polypeptide reads, in one-letter code: Ribosome maturation factor RimM (225 aa).

The PRC barrel domain maps to 144 to 225 (ADEFYWVDLI…RIVVDWEADY (82 aa)).

This sequence belongs to the RimM family. Binds ribosomal protein uS19.

The protein resides in the cytoplasm. Functionally, an accessory protein needed during the final step in the assembly of 30S ribosomal subunit, possibly for assembly of the head region. Essential for efficient processing of 16S rRNA. May be needed both before and after RbfA during the maturation of 16S rRNA. It has affinity for free ribosomal 30S subunits but not for 70S ribosomes. This is Ribosome maturation factor RimM from Burkholderia orbicola (strain MC0-3).